A 296-amino-acid polypeptide reads, in one-letter code: Ribosomal RNA small subunit methyltransferase H (296 aa).

S-adenosyl-L-methionine contacts are provided by residues 38 to 40, Glu-57, Phe-80, Asp-103, and His-110; that span reads GAH.

Belongs to the methyltransferase superfamily. RsmH family.

It is found in the cytoplasm. The enzyme catalyses cytidine(1402) in 16S rRNA + S-adenosyl-L-methionine = N(4)-methylcytidine(1402) in 16S rRNA + S-adenosyl-L-homocysteine + H(+). Its function is as follows. Specifically methylates the N4 position of cytidine in position 1402 (C1402) of 16S rRNA. The polypeptide is Ribosomal RNA small subunit methyltransferase H (Borrelia garinii subsp. bavariensis (strain ATCC BAA-2496 / DSM 23469 / PBi) (Borreliella bavariensis)).